The sequence spans 1235 residues: ATP-dependent helicase/nuclease subunit A (1235 aa).

The region spanning 12-482 (ALWTDDQWKA…IDLSQNFRSR (471 aa)) is the UvrD-like helicase ATP-binding domain. ATP is bound at residue 33 to 40 (AAAGSGKT). Residues 509 to 800 (AAELTLGASF…RMMTIHASKG (292 aa)) enclose the UvrD-like helicase C-terminal domain.

It belongs to the helicase family. AddA subfamily. In terms of assembly, heterodimer of AddA and AddB/RexB. It depends on Mg(2+) as a cofactor.

It catalyses the reaction Couples ATP hydrolysis with the unwinding of duplex DNA by translocating in the 3'-5' direction.. It carries out the reaction ATP + H2O = ADP + phosphate + H(+). Functionally, the heterodimer acts as both an ATP-dependent DNA helicase and an ATP-dependent, dual-direction single-stranded exonuclease. Recognizes the chi site generating a DNA molecule suitable for the initiation of homologous recombination. The AddA nuclease domain is required for chi fragment generation; this subunit has the helicase and 3' -&gt; 5' nuclease activities. This Listeria innocua serovar 6a (strain ATCC BAA-680 / CLIP 11262) protein is ATP-dependent helicase/nuclease subunit A.